Here is a 350-residue protein sequence, read N- to C-terminus: tRNA U34 carboxymethyltransferase (350 aa).

Carboxy-S-adenosyl-L-methionine is bound by residues lysine 101, tryptophan 125, lysine 130, glycine 150, aspartate 172 to serine 174, leucine 208 to glutamate 209, methionine 224, tyrosine 228, and arginine 343.

Belongs to the class I-like SAM-binding methyltransferase superfamily. CmoB family. In terms of assembly, homotetramer.

The catalysed reaction is carboxy-S-adenosyl-L-methionine + 5-hydroxyuridine(34) in tRNA = 5-carboxymethoxyuridine(34) in tRNA + S-adenosyl-L-homocysteine + H(+). In terms of biological role, catalyzes carboxymethyl transfer from carboxy-S-adenosyl-L-methionine (Cx-SAM) to 5-hydroxyuridine (ho5U) to form 5-carboxymethoxyuridine (cmo5U) at position 34 in tRNAs. The sequence is that of tRNA U34 carboxymethyltransferase from Psychrobacter arcticus (strain DSM 17307 / VKM B-2377 / 273-4).